The primary structure comprises 464 residues: Probable glycosyltransferase Saci_1499 (464 aa).

6 helical membrane passes run 6–26, 300–320, 337–357, 373–393, 416–436, and 439–459; these read IFLN…QIIL, LIIY…STLL, ALLF…SLAL, LTAF…KGLL, IIAI…LYIY, and YYVT…TMLL.

This sequence belongs to the glycosyltransferase 2 family.

It localises to the cell membrane. Its function is as follows. Probably part of a 4-gene DNA damage response locus in which the upstream ups system, in combination with this downstream locus, functions in homologous recombination to rescue Sulfolobales from DNA-damaging threats. The protein is Probable glycosyltransferase Saci_1499 of Sulfolobus acidocaldarius (strain ATCC 33909 / DSM 639 / JCM 8929 / NBRC 15157 / NCIMB 11770).